The following is a 527-amino-acid chain: Phosphoenolpyruvate carboxykinase (ATP) (527 aa).

3 residues coordinate substrate: Arg-55, Tyr-191, and Lys-197. Residues Lys-197, His-216, and 232–240 (GLSGTGKTT) each bind ATP. The Mn(2+) site is built by Lys-197 and His-216. Asp-253 lines the Mn(2+) pocket. Residues Glu-281, Arg-318, and Thr-443 each coordinate ATP. Position 318 (Arg-318) interacts with substrate.

It belongs to the phosphoenolpyruvate carboxykinase (ATP) family. The cofactor is Mn(2+).

It is found in the cytoplasm. The enzyme catalyses oxaloacetate + ATP = phosphoenolpyruvate + ADP + CO2. The protein operates within carbohydrate biosynthesis; gluconeogenesis. Functionally, involved in the gluconeogenesis. Catalyzes the conversion of oxaloacetate (OAA) to phosphoenolpyruvate (PEP) through direct phosphoryl transfer between the nucleoside triphosphate and OAA. This is Phosphoenolpyruvate carboxykinase (ATP) from Brevibacillus brevis (strain 47 / JCM 6285 / NBRC 100599).